Here is a 360-residue protein sequence, read N- to C-terminus: Histidinol-phosphate aminotransferase (360 aa).

N6-(pyridoxal phosphate)lysine is present on lysine 222.

This sequence belongs to the class-II pyridoxal-phosphate-dependent aminotransferase family. Histidinol-phosphate aminotransferase subfamily. The cofactor is pyridoxal 5'-phosphate.

It carries out the reaction L-histidinol phosphate + 2-oxoglutarate = 3-(imidazol-4-yl)-2-oxopropyl phosphate + L-glutamate. It participates in amino-acid biosynthesis; L-histidine biosynthesis; L-histidine from 5-phospho-alpha-D-ribose 1-diphosphate: step 7/9. The protein is Histidinol-phosphate aminotransferase of Haloarcula marismortui (strain ATCC 43049 / DSM 3752 / JCM 8966 / VKM B-1809) (Halobacterium marismortui).